The following is a 79-amino-acid chain: ATP synthase subunit c (79 aa).

A run of 2 helical transmembrane segments spans residues Ile10–Leu30 and Phe52–Tyr72.

Belongs to the ATPase C chain family. In terms of assembly, F-type ATPases have 2 components, F(1) - the catalytic core - and F(0) - the membrane proton channel. F(1) has five subunits: alpha(3), beta(3), gamma(1), delta(1), epsilon(1). F(0) has three main subunits: a(1), b(2) and c(10-14). The alpha and beta chains form an alternating ring which encloses part of the gamma chain. F(1) is attached to F(0) by a central stalk formed by the gamma and epsilon chains, while a peripheral stalk is formed by the delta and b chains.

The protein resides in the cell inner membrane. F(1)F(0) ATP synthase produces ATP from ADP in the presence of a proton or sodium gradient. F-type ATPases consist of two structural domains, F(1) containing the extramembraneous catalytic core and F(0) containing the membrane proton channel, linked together by a central stalk and a peripheral stalk. During catalysis, ATP synthesis in the catalytic domain of F(1) is coupled via a rotary mechanism of the central stalk subunits to proton translocation. In terms of biological role, key component of the F(0) channel; it plays a direct role in translocation across the membrane. A homomeric c-ring of between 10-14 subunits forms the central stalk rotor element with the F(1) delta and epsilon subunits. The sequence is that of ATP synthase subunit c from Thiobacillus denitrificans (strain ATCC 25259 / T1).